The sequence spans 412 residues: Argininosuccinate synthase (412 aa).

Residues 16–24 and A44 contribute to the ATP site; that span reads AYSGGLDTS. L-citrulline is bound by residues Y96 and S101. G126 is an ATP binding site. L-aspartate contacts are provided by T128, N132, and D133. N132 contacts L-citrulline. 5 residues coordinate L-citrulline: R136, S185, S194, E270, and Y282.

The protein belongs to the argininosuccinate synthase family. Type 1 subfamily. Homotetramer.

The protein resides in the cytoplasm. It carries out the reaction L-citrulline + L-aspartate + ATP = 2-(N(omega)-L-arginino)succinate + AMP + diphosphate + H(+). The protein operates within amino-acid biosynthesis; L-arginine biosynthesis; L-arginine from L-ornithine and carbamoyl phosphate: step 2/3. In Shewanella baltica (strain OS195), this protein is Argininosuccinate synthase.